The following is a 185-amino-acid chain: Orotate phosphoribosyltransferase (185 aa).

5-phospho-alpha-D-ribose 1-diphosphate contacts are provided by residues Arg98, Lys99, Lys102, His104, and 128–136 (EDVTTTGGS). Residues Thr132 and Arg160 each contribute to the orotate site.

It belongs to the purine/pyrimidine phosphoribosyltransferase family. PyrE subfamily. In terms of assembly, homodimer. Requires Mg(2+) as cofactor.

It carries out the reaction orotidine 5'-phosphate + diphosphate = orotate + 5-phospho-alpha-D-ribose 1-diphosphate. Its pathway is pyrimidine metabolism; UMP biosynthesis via de novo pathway; UMP from orotate: step 1/2. Functionally, catalyzes the transfer of a ribosyl phosphate group from 5-phosphoribose 1-diphosphate to orotate, leading to the formation of orotidine monophosphate (OMP). This Bradyrhizobium sp. (strain BTAi1 / ATCC BAA-1182) protein is Orotate phosphoribosyltransferase.